We begin with the raw amino-acid sequence, 372 residues long: MAASVPWACCAVLAAAAAAVYTQKHSPQEAPHVQYERLGADVTLPCGTASWDAAVTWRVNGTDLAPDLLNGSQLILRSLELGHSGLYACFHRDSWHLRHQVLLHVGLPPREPVLSCRSNTYPKGFYCSWHLPTPTYIPNTFNVTVLHGSKIMVCEKDPALKNRCHIRYMHLFSTIKYKVSISVSNALGHNTTAITFDEFTIVKPDPPENVVARPVPSNPRRLEVTWQTPSTWPDPESFPLKFFLRYRPLILDQWQHVELSDGTAHTITDAYAGKEYIIQVAAKDNEIGTWSDWSVAAHATPWTEEPRHLTTEAQAPETTTSTTSSLAPPPTTKICDPGELGSGGGPSILFLTSVPVTLVLAAAAATANNLLI.

Positions 1–22 (MAASVPWACCAVLAAAAAAVYT) are cleaved as a signal peptide. Residues 27–104 (PQEAPHVQYE…WHLRHQVLLH (78 aa)) enclose the Ig-like C2-type domain. Cys-46 and Cys-89 are oxidised to a cystine. Asn-60, Asn-70, Asn-142, and Asn-190 each carry an N-linked (GlcNAc...) asparagine glycan. Fibronectin type-III domains are found at residues 108-205 (PPRE…VKPD) and 206-306 (PPEN…TEEP). Positions 290–294 (WSDWS) match the WSXWS motif motif. The disordered stretch occupies residues 301-338 (PWTEEPRHLTTEAQAPETTTSTTSSLAPPPTTKICDPG). Low complexity predominate over residues 311-326 (TEAQAPETTTSTTSSL). Ser-342 carries the GPI-anchor amidated serine lipid modification. The propeptide at 343 to 372 (GGGPSILFLTSVPVTLVLAAAAATANNLLI) is removed in mature form.

Belongs to the type I cytokine receptor family. Type 3 subfamily. Forms a heterotrimer with LIFR and IL6ST. Interacts with heterodimeric neurotropic cytokine composed of CLCF1/CLC and CRLF1/CLF-1. Either alone or in complex with the heterodimer CLCF1-CRLF1 interacts with SORL1; this interaction may promote internalization and lysosomal degradation.

The protein resides in the cell membrane. Its function is as follows. Binds to CNTF. The alpha subunit provides the receptor specificity. The protein is Ciliary neurotrophic factor receptor subunit alpha (Cntfr) of Mus musculus (Mouse).